A 178-amino-acid polypeptide reads, in one-letter code: Ribosome maturation factor RimM (178 aa).

The PRC barrel domain maps to 99 to 178; the sequence is QGEFYWRDLI…EITVDWDPGF (80 aa).

Belongs to the RimM family. As to quaternary structure, binds ribosomal protein uS19.

The protein localises to the cytoplasm. Its function is as follows. An accessory protein needed during the final step in the assembly of 30S ribosomal subunit, possibly for assembly of the head region. Essential for efficient processing of 16S rRNA. May be needed both before and after RbfA during the maturation of 16S rRNA. It has affinity for free ribosomal 30S subunits but not for 70S ribosomes. This chain is Ribosome maturation factor RimM, found in Pseudoalteromonas translucida (strain TAC 125).